We begin with the raw amino-acid sequence, 454 residues long: Adenosylmethionine-8-amino-7-oxononanoate aminotransferase (454 aa).

Pyridoxal 5'-phosphate is bound at residue 119–120; sequence GA. Residue Y152 coordinates substrate. Residue D257 coordinates pyridoxal 5'-phosphate. K286, G321, and R416 together coordinate substrate. Position 286 is an N6-(pyridoxal phosphate)lysine (K286).

It belongs to the class-III pyridoxal-phosphate-dependent aminotransferase family. BioA subfamily. Homodimer. The cofactor is pyridoxal 5'-phosphate.

The protein localises to the cytoplasm. The catalysed reaction is (8S)-8-amino-7-oxononanoate + S-adenosyl-L-methionine = S-adenosyl-4-methylsulfanyl-2-oxobutanoate + (7R,8S)-7,8-diammoniononanoate. It participates in cofactor biosynthesis; biotin biosynthesis; 7,8-diaminononanoate from 8-amino-7-oxononanoate (SAM route): step 1/1. Functionally, catalyzes the transfer of the alpha-amino group from S-adenosyl-L-methionine (SAM) to 7-keto-8-aminopelargonic acid (KAPA) to form 7,8-diaminopelargonic acid (DAPA). It is the only aminotransferase known to utilize SAM as an amino donor. In Anoxybacillus flavithermus (strain DSM 21510 / WK1), this protein is Adenosylmethionine-8-amino-7-oxononanoate aminotransferase.